Consider the following 205-residue polypeptide: Ras-related protein RABC2b (205 aa).

20–27 (GDSGVGKS) contacts GTP. The Effector region motif lies at 41 to 49 (LAPTIGVDF). GTP contacts are provided by residues 67-71 (DTAGQ), 127-130 (NKVD), and 157-158 (SA). 2 S-geranylgeranyl cysteine lipidation sites follow: C202 and C203.

The protein belongs to the small GTPase superfamily. Rab family.

The protein resides in the cell membrane. Its function is as follows. Intracellular vesicle trafficking and protein transport. The protein is Ras-related protein RABC2b (RABC2B) of Arabidopsis thaliana (Mouse-ear cress).